The chain runs to 219 residues: Octanoyltransferase (219 aa).

The BPL/LPL catalytic domain occupies 31-206 (TASADEIWLV…ECLRLMKASA (176 aa)). Substrate-binding positions include 70-77 (RGGQVTFH), 137-139 (SLG), and 150-152 (GLA). C168 (acyl-thioester intermediate) is an active-site residue.

Belongs to the LipB family.

Its subcellular location is the cytoplasm. It catalyses the reaction octanoyl-[ACP] + L-lysyl-[protein] = N(6)-octanoyl-L-lysyl-[protein] + holo-[ACP] + H(+). It functions in the pathway protein modification; protein lipoylation via endogenous pathway; protein N(6)-(lipoyl)lysine from octanoyl-[acyl-carrier-protein]: step 1/2. In terms of biological role, catalyzes the transfer of endogenously produced octanoic acid from octanoyl-acyl-carrier-protein onto the lipoyl domains of lipoate-dependent enzymes. Lipoyl-ACP can also act as a substrate although octanoyl-ACP is likely to be the physiological substrate. This chain is Octanoyltransferase, found in Sodalis glossinidius (strain morsitans).